The following is a 227-amino-acid chain: Nucleoside triphosphate pyrophosphatase (227 aa).

Aspartate 77 serves as the catalytic Proton acceptor.

The protein belongs to the Maf family. A divalent metal cation is required as a cofactor.

The protein resides in the cytoplasm. The catalysed reaction is a ribonucleoside 5'-triphosphate + H2O = a ribonucleoside 5'-phosphate + diphosphate + H(+). It catalyses the reaction a 2'-deoxyribonucleoside 5'-triphosphate + H2O = a 2'-deoxyribonucleoside 5'-phosphate + diphosphate + H(+). In terms of biological role, nucleoside triphosphate pyrophosphatase. May have a dual role in cell division arrest and in preventing the incorporation of modified nucleotides into cellular nucleic acids. The chain is Nucleoside triphosphate pyrophosphatase from Rickettsia typhi (strain ATCC VR-144 / Wilmington).